The primary structure comprises 297 residues: F-actin-capping protein subunit beta (297 aa).

Basic and acidic residues predominate over residues 276–289 (DLSGKESDDKRQSE). Residues 276 to 297 (DLSGKESDDKRQSELVKGLQSL) are disordered.

It belongs to the F-actin-capping protein beta subunit family. In terms of assembly, component of the F-actin capping complex, composed of a heterodimer of an alpha and a beta subunit.

The protein resides in the cytoplasm. Its subcellular location is the cytoskeleton. It is found in the actin patch. Its function is as follows. F-actin-capping proteins bind in a Ca(2+)-independent manner to the fast growing ends of actin filaments (barbed end) thereby blocking the exchange of subunits at these ends. Unlike other capping proteins (such as gelsolin and severin), these proteins do not sever actin filaments. The protein is F-actin-capping protein subunit beta (CAP2) of Debaryomyces hansenii (strain ATCC 36239 / CBS 767 / BCRC 21394 / JCM 1990 / NBRC 0083 / IGC 2968) (Yeast).